We begin with the raw amino-acid sequence, 158 residues long: 2-C-methyl-D-erythritol 2,4-cyclodiphosphate synthase (158 aa).

A divalent metal cation is bound by residues Asp-9 and His-11. 4-CDP-2-C-methyl-D-erythritol 2-phosphate contacts are provided by residues 9-11 (DVH) and 35-36 (HS). Residue His-43 participates in a divalent metal cation binding. 4-CDP-2-C-methyl-D-erythritol 2-phosphate is bound by residues 57-59 (DIG), 62-66 (FPDTD), 101-107 (AQKPKMA), 133-136 (TTTE), Phe-140, and Arg-143.

Belongs to the IspF family. Homotrimer. A divalent metal cation serves as cofactor.

The enzyme catalyses 4-CDP-2-C-methyl-D-erythritol 2-phosphate = 2-C-methyl-D-erythritol 2,4-cyclic diphosphate + CMP. It participates in isoprenoid biosynthesis; isopentenyl diphosphate biosynthesis via DXP pathway; isopentenyl diphosphate from 1-deoxy-D-xylulose 5-phosphate: step 4/6. In terms of biological role, involved in the biosynthesis of isopentenyl diphosphate (IPP) and dimethylallyl diphosphate (DMAPP), two major building blocks of isoprenoid compounds. Catalyzes the conversion of 4-diphosphocytidyl-2-C-methyl-D-erythritol 2-phosphate (CDP-ME2P) to 2-C-methyl-D-erythritol 2,4-cyclodiphosphate (ME-CPP) with a corresponding release of cytidine 5-monophosphate (CMP). The polypeptide is 2-C-methyl-D-erythritol 2,4-cyclodiphosphate synthase (Bacillus thuringiensis subsp. konkukian (strain 97-27)).